The primary structure comprises 310 residues: Olfactory receptor 4C16 (310 aa).

Topologically, residues 1–23 are extracellular; it reads MQLNNNVTEFILLGLTQDPFWKK. Asn-6 carries N-linked (GlcNAc...) asparagine glycosylation. Residues 24–47 form a helical membrane-spanning segment; sequence IVFVIFLRLYLGTLLGNLLIIISV. Topologically, residues 48-55 are cytoplasmic; the sequence is KTSQALKN. The chain crosses the membrane as a helical span at residues 56–77; the sequence is PMFFFLFYLSLSDTCLSTSITP. The Extracellular segment spans residues 78–98; it reads RMIVDALLKKTTISFSECMIQ. Residues Cys-95 and Cys-187 are joined by a disulfide bond. The chain crosses the membrane as a helical span at residues 99–118; sequence VFSSHVFGCLEIFILILTAV. Residues 119 to 137 are Cytoplasmic-facing; sequence DRYVDICKPLHYMTIISQW. The helical transmembrane segment at 138 to 156 threads the bilayer; the sequence is VCGVLMAVAWVGSCVHSLV. Over 157 to 193 the chain is Extracellular; sequence QIFLALSLPFCGPNVINHCFCDLQPLLKQACSETYVV. The chain crosses the membrane as a helical span at residues 194–217; the sequence is NLLLVSNSGAICAVSYVMLIFSYV. Residues 218 to 233 lie on the Cytoplasmic side of the membrane; the sequence is IFLHSLRNHSAEVIKK. A helical transmembrane segment spans residues 234–256; the sequence is ALSTCVSHIIVVILFFGPCIFMY. Over 257–267 the chain is Extracellular; it reads TCLATVFPMDK. A helical membrane pass occupies residues 268 to 287; the sequence is MIAVFYTVGTSFLNPVIYTL. Topologically, residues 288–310 are cytoplasmic; sequence KNTEVKSAMRKLWSKKLITDDKR.

This sequence belongs to the G-protein coupled receptor 1 family.

The protein resides in the cell membrane. Its function is as follows. Odorant receptor. The sequence is that of Olfactory receptor 4C16 (OR4C16) from Homo sapiens (Human).